The chain runs to 87 residues: Small ribosomal subunit protein uS15 (87 aa).

The protein belongs to the universal ribosomal protein uS15 family. Part of the 30S ribosomal subunit. Forms a bridge to the 50S subunit in the 70S ribosome, contacting the 23S rRNA.

Functionally, one of the primary rRNA binding proteins, it binds directly to 16S rRNA where it helps nucleate assembly of the platform of the 30S subunit by binding and bridging several RNA helices of the 16S rRNA. Forms an intersubunit bridge (bridge B4) with the 23S rRNA of the 50S subunit in the ribosome. In Clostridium beijerinckii (strain ATCC 51743 / NCIMB 8052) (Clostridium acetobutylicum), this protein is Small ribosomal subunit protein uS15.